Here is a 445-residue protein sequence, read N- to C-terminus: Cryptochrome DASH (445 aa).

The Photolyase/cryptochrome alpha/beta domain occupies 4–137; that stretch reads KIGLYWFTFD…VIVQHSVRSL (134 aa).

This sequence belongs to the DNA photolyase class-1 family. It depends on FAD as a cofactor. (6R)-5,10-methylene-5,6,7,8-tetrahydrofolate is required as a cofactor.

May have a photoreceptor function. Binds DNA; probably functions as a transcriptional repressor. This chain is Cryptochrome DASH (cry), found in Vibrio parahaemolyticus serotype O3:K6 (strain RIMD 2210633).